The primary structure comprises 477 residues: Ankyrin repeat, SAM and basic leucine zipper domain-containing protein 1 (477 aa).

Phosphoserine is present on residues S17, S18, and S20. ANK repeat units follow at residues 46–76 (EKKEKFKKALTTGDVSLVQELLDSGIISVDA), 80–109 (YGWTPLMYAASVANAELVRVLLDRGANASF), 112–146 (DKQTILITACSAHGSEEQILKCVELLLSRNADPNV), 150–179 (RLMTPIMYAARDGHTQVVALLVAHGAEVNT), 183–212 (NGYTALTWAARQGRKSIVLKLLELGANKML), and 216–245 (DGKLPSEIAKRNKHHEIFSLLSFTLNPLEG). An SAM domain is found at 274 to 336 (SYAAFGDLEV…KILTALKELE (63 aa)).

In terms of assembly, interacts with DDX4, PIWIL1, RANBP9 and TDRD1.

The protein resides in the cytoplasm. Its function is as follows. Plays a central role during spermatogenesis by repressing transposable elements and preventing their mobilization, which is essential for the germline integrity. Acts via the piRNA metabolic process, which mediates the repression of transposable elements during meiosis by forming complexes composed of piRNAs and Piwi proteins and governs the methylation and subsequent repression of transposons. Its association with pi-bodies suggests a participation in the primary piRNAs metabolic process. Required prior to the pachytene stage to facilitate the production of multiple types of piRNAs, including those associated with repeats involved in the regulation of retrotransposons. May act by mediating protein-protein interactions during germ cell maturation. The protein is Ankyrin repeat, SAM and basic leucine zipper domain-containing protein 1 (ASZ1) of Ateles geoffroyi (Black-handed spider monkey).